The following is a 182-amino-acid chain: Tropomyosin-like protein (182 aa).

Positions 1–68 (FDRYNQILDE…ELEQRRTEQQ (68 aa)) form a coiled coil. Positions 32 to 66 (DEETKKIKQEEAEMKKKIEGEASRKKLELEQRRTE) are enriched in basic and acidic residues. Disordered regions lie at residues 32 to 81 (DEET…GSTD) and 140 to 160 (DQPA…DAGL). A compositionally biased stretch (low complexity) spans 140–153 (DQPAQAGPEPAAPA).

Its subcellular location is the cytoplasm. It localises to the cytoskeleton. This is Tropomyosin-like protein from Pichia angusta (Yeast).